Consider the following 350-residue polypeptide: ADP-ribose pyrophosphatase, mitochondrial (350 aa).

A mitochondrion-targeting transit peptide spans 1–46; the sequence is MAGRSLGKAVATVSLSVALASVTVRSSGCRAIPAPRNPFPSCGFHL. Disordered regions lie at residues 53–77 and 116–153; these read GSNG…KVER and SESS…PAGR. The residue at position 121 (S121) is a Phosphoserine. The span at 124–135 shows a compositional bias: basic and acidic residues; sequence FNEKDGHVERKS. The Nudix hydrolase domain occupies 178 to 334; the sequence is WKRDESGNKI…SQFIKLVAEK (157 aa). The short motif at 215-237 is the Nudix box element; the sequence is GMVDPGEKISATLKREFGEEALN.

This sequence belongs to the Nudix hydrolase family. NudF subfamily. In terms of assembly, monomer. Interacts with GLOD4. Mg(2+) serves as cofactor. It depends on Mn(2+) as a cofactor.

The protein resides in the mitochondrion. It carries out the reaction ADP-D-ribose + H2O = D-ribose 5-phosphate + AMP + 2 H(+). Functionally, hydrolyzes ADP-ribose (ADPR) to AMP and ribose 5'-phosphate. This chain is ADP-ribose pyrophosphatase, mitochondrial (Nudt9), found in Rattus norvegicus (Rat).